The following is a 378-amino-acid chain: uncharacterized protein (378 aa).

It belongs to the mimivirus L17x/L18x family.

This is an uncharacterized protein from Acanthamoeba polyphaga (Amoeba).